We begin with the raw amino-acid sequence, 817 residues long: MEYNFREIEKKWQQKWFSQNKYKVTEDSPKPKYYVLEMFPYPSGKLHMGHVRNYSIGDVFARFMRLKGYNVLHPMGWDAFGLPAENAAIKHGIHPSDWTWSNIENMKRQLKELGISYDWDREVATCHPDYYKWTQWMFLQFYKAGLAYRKRSYVNWCPSCETVLANEQVVNGRCERCKSLVGKKDLEQWFFRITKYAERLLRDIDKLDGWPEKVKIMQKNWIGRSEGAEIEFEIDGLGKRIKVFTTRPDTLFGVTYLVLAPEHPLTKEIIAGKPQEKECLEFIEKMQYLNEIERTSTETEKEGRFTGGYAIHPLTGKKVPIYIANYVLVDYGTGAVMGVPAHDQRDFEFAKKYNLPIKVVIKGDGVDIQNLQSAYEGEGVLINSGEFNGLKNTEAMKKITEYLEKNGYGKACVTYKLRDWLISRQRYWGAPIPIVYCDDCGIVPVPEEELPVLLPYNVEFKPTGQSPLAYCEEFVNTTCPKCGKPARRETDTMDTFICSSWYYFRYTDPKNSEKPFEKSLVDYWLPVDQYIGGVEHAILHLLYSRFFTKVLYDLGYISFEEPFKNLLTQGMVLKDGAKMSKSLGNIVSPEEIVEKYGADTARLFILFAAPPERDLEWSDQGVEGCFRFLNRLWRLYIELKDKLSDSSLPGQSELDDELNYRLNYTIKKVTEDIGERFNFNTAISSIMELLNFLYDYKEKGSLNRELILKTLKNFLILIYPFTPHIACELWEIMGFEGDIEDVSWPEYDESALVRKNVEIAVQINGKVRARFDVPVDISEEELKQKIMNNEKIKTLLEGKEIVKFIYVKNRLVNIVIK.

A 'HIGH' region motif is present at residues 40 to 50 (PYPSGKLHMGH). Residues 578-582 (KMSKS) carry the 'KMSKS' region motif. Lys581 provides a ligand contact to ATP.

It belongs to the class-I aminoacyl-tRNA synthetase family.

Its subcellular location is the cytoplasm. It carries out the reaction tRNA(Leu) + L-leucine + ATP = L-leucyl-tRNA(Leu) + AMP + diphosphate. This is Leucine--tRNA ligase from Caldicellulosiruptor saccharolyticus (strain ATCC 43494 / DSM 8903 / Tp8T 6331).